The sequence spans 475 residues: Glycogen synthase (475 aa).

ADP-alpha-D-glucose is bound at residue K15.

The protein belongs to the glycosyltransferase 1 family. Bacterial/plant glycogen synthase subfamily.

The catalysed reaction is [(1-&gt;4)-alpha-D-glucosyl](n) + ADP-alpha-D-glucose = [(1-&gt;4)-alpha-D-glucosyl](n+1) + ADP + H(+). It participates in glycan biosynthesis; glycogen biosynthesis. Synthesizes alpha-1,4-glucan chains using ADP-glucose. The chain is Glycogen synthase from Clostridium kluyveri (strain ATCC 8527 / DSM 555 / NBRC 12016 / NCIMB 10680 / K1).